A 222-amino-acid polypeptide reads, in one-letter code: MRRAVVLLSGGLDSTTCLSVALAEGYEVYPLSFDYGQRNRKELESAKQVVKYFKLKEHKIVKIGNVGGSALTDMNIDVPDYKGLPTIPVTYVPARNIIFLSYAVGYAEVVDAEAIFIGVNAVDYSGYPDCRPEFIEAFQKAINLGTKSGVNGKPVKIITPLINLSKAEIIKLACENNAPLHLTTTCYRGGEKACGVCDSCVLRLKGFKEAGIVDTIEYMERT.

8–18 is an ATP binding site; it reads LSGGLDSTTCL. Residues Cys-186, Cys-194, Cys-197, and Cys-200 each contribute to the Zn(2+) site.

This sequence belongs to the QueC family. Homodimer. Requires Zn(2+) as cofactor.

It carries out the reaction 7-carboxy-7-deazaguanine + NH4(+) + ATP = 7-cyano-7-deazaguanine + ADP + phosphate + H2O + H(+). It functions in the pathway purine metabolism; 7-cyano-7-deazaguanine biosynthesis. Its function is as follows. Catalyzes the ATP-dependent conversion of 7-carboxy-7-deazaguanine (CDG) to 7-cyano-7-deazaguanine (preQ(0)). This Acetivibrio thermocellus (strain ATCC 27405 / DSM 1237 / JCM 9322 / NBRC 103400 / NCIMB 10682 / NRRL B-4536 / VPI 7372) (Clostridium thermocellum) protein is 7-cyano-7-deazaguanine synthase.